The primary structure comprises 474 residues: tRNA-2-methylthio-N(6)-dimethylallyladenosine synthase (474 aa).

An MTTase N-terminal domain is found at 3–120; it reads KKLYIKTFGC…LPQMISTRQI (118 aa). Cys-12, Cys-49, Cys-83, Cys-157, Cys-161, and Cys-164 together coordinate [4Fe-4S] cluster. The Radical SAM core domain maps to 143-382; it reads RTEGVTAFVS…ELQAQAISVR (240 aa). One can recognise a TRAM domain in the interval 381-444; it reads VRMVGTTQRV…SHTLRGENVR (64 aa).

Belongs to the methylthiotransferase family. MiaB subfamily. Monomer. [4Fe-4S] cluster serves as cofactor.

The protein localises to the cytoplasm. It carries out the reaction N(6)-dimethylallyladenosine(37) in tRNA + (sulfur carrier)-SH + AH2 + 2 S-adenosyl-L-methionine = 2-methylsulfanyl-N(6)-dimethylallyladenosine(37) in tRNA + (sulfur carrier)-H + 5'-deoxyadenosine + L-methionine + A + S-adenosyl-L-homocysteine + 2 H(+). Functionally, catalyzes the methylthiolation of N6-(dimethylallyl)adenosine (i(6)A), leading to the formation of 2-methylthio-N6-(dimethylallyl)adenosine (ms(2)i(6)A) at position 37 in tRNAs that read codons beginning with uridine. The sequence is that of tRNA-2-methylthio-N(6)-dimethylallyladenosine synthase from Nitrosospira multiformis (strain ATCC 25196 / NCIMB 11849 / C 71).